Consider the following 1826-residue polypeptide: Kinesin-like protein KIF13B (1826 aa).

Residues Lys-5–Ile-353 enclose the Kinesin motor domain. Gly-103–Ser-110 contributes to the ATP binding site. Positions Asn-364–Ser-439 form a coiled coil. Residues Thr-471–Gly-535 enclose the FHA domain. The segment at Lys-546–Ser-582 is disordered. Positions Ser-561 to Gln-570 are enriched in polar residues. Coiled-coil stretches lie at residues Met-607–Arg-710, Ser-752–Glu-772, and Leu-1096–Ala-1143. Ser-661 carries the phosphoserine modification. The disordered stretch occupies residues Glu-1367–Ser-1420. Composition is skewed to polar residues over residues Arg-1378–Arg-1392 and Glu-1409–Ser-1420. Ser-1379 carries the phosphoserine modification. Ser-1381 is modified (phosphoserine; by MARK2). Residues Ser-1382 and Ser-1391 each carry the phosphoserine modification. Ser-1410 carries the phosphoserine; by MARK2 modification. Ser-1432, Ser-1438, and Ser-1537 each carry phosphoserine. Position 1545 is a phosphothreonine (Thr-1545). Position 1559 is a phosphoserine (Ser-1559). The segment covering Ser-1579 to Ile-1607 has biased composition (low complexity). 2 disordered regions span residues Ser-1579–Arg-1650 and Met-1662–Pro-1698. A compositionally biased stretch (pro residues) spans Ser-1608–Pro-1624. The residue at position 1644 (Ser-1644) is a Phosphoserine. Residues Pro-1671–Ala-1688 are compositionally biased toward low complexity. Residues Gly-1721 to Arg-1763 enclose the CAP-Gly domain. The residue at position 1797 (Ser-1797) is a Phosphoserine.

It belongs to the TRAFAC class myosin-kinesin ATPase superfamily. Kinesin family. Binds to DLG1 and DLG4. Interacts (when phosphorylated at Ser-1381 and Ser-1410) with 14-3-3. Post-translationally, phosphorylated at Ser-1381 and Ser-1410 by MARK2, promoting interaction with 14-3-3 and inhibiting microtubule-dependent accumulation and formation of axons. As to expression, ubiquitous.

The protein resides in the cytoplasm. The protein localises to the cytoskeleton. Its subcellular location is the cell projection. It is found in the axon. Its function is as follows. Involved in reorganization of the cortical cytoskeleton. Regulates axon formation by promoting the formation of extra axons. May be functionally important for the intracellular trafficking of MAGUKs and associated protein complexes. In Homo sapiens (Human), this protein is Kinesin-like protein KIF13B (KIF13B).